We begin with the raw amino-acid sequence, 132 residues long: Small ribosomal subunit protein uS8 (132 aa).

This sequence belongs to the universal ribosomal protein uS8 family. As to quaternary structure, part of the 30S ribosomal subunit. Contacts proteins S5 and S12.

One of the primary rRNA binding proteins, it binds directly to 16S rRNA central domain where it helps coordinate assembly of the platform of the 30S subunit. This chain is Small ribosomal subunit protein uS8, found in Borreliella burgdorferi (strain ZS7) (Borrelia burgdorferi).